The primary structure comprises 257 residues: Snake venom serine protease rhinocerase 4 (257 aa).

The N-terminal stretch at 1–17 is a signal peptide; the sequence is VLIRVLANLLVLQLSYA. Residues 18–23 constitute a propeptide that is removed on maturation; that stretch reads QKSSEL. The region spanning 24–248 is the Peptidase S1 domain; it reads VIGGAECNIN…YTDWIRSIIG (225 aa). 6 disulfides stabilise this stretch: C30-C162, C49-C65, C97-C255, C141-C209, C173-C188, and C199-C224. N43 carries an N-linked (GlcNAc...) asparagine glycan. Catalysis depends on H64, which acts as the Charge relay system. 2 N-linked (GlcNAc...) asparagine glycosylation sites follow: N78 and N100. Catalysis depends on D109, which acts as the Charge relay system. S203 serves as the catalytic Charge relay system. N-linked (GlcNAc...) asparagine glycosylation is present at N250.

Belongs to the peptidase S1 family. Snake venom subfamily. In terms of tissue distribution, expressed by the venom gland.

The protein localises to the secreted. Functionally, snake venom serine protease that may act in the hemostasis system of the prey. The protein is Snake venom serine protease rhinocerase 4 of Bitis rhinoceros (West African gaboon viper).